Reading from the N-terminus, the 134-residue chain is Lymphocyte antigen 6I (134 aa).

The first 21 residues, 1–21 (MDTSHAIKSCVLILLVTLLCA), serve as a signal peptide directing secretion. Residues 27 to 105 (LECYQCYGVP…ISCCQEDLCN (79 aa)) enclose the UPAR/Ly6 domain. Cystine bridges form between C29/C53, C32/C41, C46/C74, C78/C98, and C99/C104. N95 carries N-linked (GlcNAc...) asparagine glycosylation. G112 carries GPI-anchor amidated glycine lipidation. Residues 113-134 (SSWTTAGVLLFSLGSVLLQTLM) constitute a propeptide, removed in mature form.

As to expression, expressed in hematopoietic tissue (spleen, thymus, bone marrow). Also found in peritoneal macrophages, peripheral blood leukocytes, liver, heart, brain, kidney and lung.

It is found in the cell membrane. The polypeptide is Lymphocyte antigen 6I (Ly6i) (Mus musculus (Mouse)).